Here is a 499-residue protein sequence, read N- to C-terminus: Glucose-6-phosphate isomerase (499 aa).

Glu352 acts as the Proton donor in catalysis. Active-site residues include His383 and Lys487.

It belongs to the GPI family.

The protein localises to the cytoplasm. It catalyses the reaction alpha-D-glucose 6-phosphate = beta-D-fructose 6-phosphate. The protein operates within carbohydrate biosynthesis; gluconeogenesis. Its pathway is carbohydrate degradation; glycolysis; D-glyceraldehyde 3-phosphate and glycerone phosphate from D-glucose: step 2/4. In terms of biological role, catalyzes the reversible isomerization of glucose-6-phosphate to fructose-6-phosphate. The chain is Glucose-6-phosphate isomerase from Legionella pneumophila (strain Paris).